We begin with the raw amino-acid sequence, 255 residues long: Large ribosomal subunit protein uL4 (255 aa).

Belongs to the universal ribosomal protein uL4 family. In terms of assembly, part of the 50S ribosomal subunit.

One of the primary rRNA binding proteins, this protein initially binds near the 5'-end of the 23S rRNA. It is important during the early stages of 50S assembly. It makes multiple contacts with different domains of the 23S rRNA in the assembled 50S subunit and ribosome. Functionally, forms part of the polypeptide exit tunnel. This is Large ribosomal subunit protein uL4 from Thermoplasma volcanium (strain ATCC 51530 / DSM 4299 / JCM 9571 / NBRC 15438 / GSS1).